Reading from the N-terminus, the 215-residue chain is ER lumen protein-retaining receptor A (215 aa).

Over 1–2 (MN) the chain is Lumenal. The helical transmembrane segment at 3-21 (IFRFAGDMSHLISVLILLL) threads the bilayer. The Cytoplasmic portion of the chain corresponds to 22-35 (KIYATKSCAGISLK). A helical transmembrane segment spans residues 36-53 (TQELYALVFLTRYLDLFT). The Lumenal segment spans residues 54 to 61 (DYVSLYNS). The chain crosses the membrane as a helical span at residues 62–82 (IMKIVFIASSLAIVWCMRRHP). Residues 83–98 (LVRRSYDKDLDTFRHQ) lie on the Cytoplasmic side of the membrane. The helical transmembrane segment at 99–112 (YVVLACFVLGLILN) threads the bilayer. Residues 113–119 (EKFTVQE) lie on the Lumenal side of the membrane. Residues 120 to 139 (VFWAFSIYLEAVAILPQLVL) traverse the membrane as a helical segment. At 140–151 (LQRSGNVDNLTG) the chain is on the cytoplasmic side. The helical transmembrane segment at 152–170 (QYVVFLGAYRGLYIINWIY) threads the bilayer. Residues 171 to 181 (RYFTEDHFTRW) lie on the Lumenal side of the membrane. Residues 182 to 202 (IACVSGLVQTALYADFFYYYY) form a helical membrane-spanning segment. The Cytoplasmic portion of the chain corresponds to 203–215 (ISWKTNTKLKLPA).

The protein belongs to the ERD2 family.

Its subcellular location is the endoplasmic reticulum membrane. Required for the retention of luminal endoplasmic reticulum proteins. Determines the specificity of the luminal ER protein retention system. Also required for normal vesicular traffic through the Golgi. This receptor recognizes H-D-E-L. The protein is ER lumen protein-retaining receptor A (ERD2A) of Arabidopsis thaliana (Mouse-ear cress).